The sequence spans 224 residues: Endonuclease NucS (224 aa).

Belongs to the NucS endonuclease family.

It localises to the cytoplasm. Functionally, cleaves both 3' and 5' ssDNA extremities of branched DNA structures. This chain is Endonuclease NucS, found in Rhodococcus jostii (strain RHA1).